A 210-amino-acid polypeptide reads, in one-letter code: Protein RCR2 (210 aa).

A helical membrane pass occupies residues W41 to V61. A disordered region spans residues P125–L149. S161 carries the post-translational modification Phosphoserine. A compositionally biased stretch (polar residues) spans N175–V199. The tract at residues N175 to K210 is disordered. A Phosphothreonine modification is found at T191.

To yeast YBR005W.

Its subcellular location is the membrane. In Saccharomyces cerevisiae (strain ATCC 204508 / S288c) (Baker's yeast), this protein is Protein RCR2 (RCR2).